We begin with the raw amino-acid sequence, 387 residues long: Succinate--CoA ligase [ADP-forming] subunit beta (387 aa).

ATP-binding positions include Lys46, 53–55 (GRG), Glu99, Ala102, and Glu107. Mg(2+)-binding residues include Asn199 and Asp213. Substrate-binding positions include Asn264 and 321–323 (GIV).

It belongs to the succinate/malate CoA ligase beta subunit family. Heterotetramer of two alpha and two beta subunits. Mg(2+) serves as cofactor.

It carries out the reaction succinate + ATP + CoA = succinyl-CoA + ADP + phosphate. It catalyses the reaction GTP + succinate + CoA = succinyl-CoA + GDP + phosphate. It functions in the pathway carbohydrate metabolism; tricarboxylic acid cycle; succinate from succinyl-CoA (ligase route): step 1/1. Succinyl-CoA synthetase functions in the citric acid cycle (TCA), coupling the hydrolysis of succinyl-CoA to the synthesis of either ATP or GTP and thus represents the only step of substrate-level phosphorylation in the TCA. The beta subunit provides nucleotide specificity of the enzyme and binds the substrate succinate, while the binding sites for coenzyme A and phosphate are found in the alpha subunit. This chain is Succinate--CoA ligase [ADP-forming] subunit beta, found in Campylobacter jejuni subsp. doylei (strain ATCC BAA-1458 / RM4099 / 269.97).